The primary structure comprises 83 residues: MAHKKGQGASRNGRDSESKRLGLKVGAGQRVSTGSILVRQRGTKWHPAVNVGRGKDDTLFALVDGIVVMKKTDRTYVSVIPQA.

The interval 1–25 (MAHKKGQGASRNGRDSESKRLGLKV) is disordered.

Belongs to the bacterial ribosomal protein bL27 family.

The chain is Large ribosomal subunit protein bL27 from Chlamydia muridarum (strain MoPn / Nigg).